The chain runs to 459 residues: Bifunctional protein GlmU (459 aa).

The tract at residues 1–229 (MTNYAIILAA…FDESLGVNDR (229 aa)) is pyrophosphorylase. UDP-N-acetyl-alpha-D-glucosamine is bound by residues 8 to 11 (LAAG), Lys22, Gln72, and 77 to 78 (GT). Asp102 contributes to the Mg(2+) binding site. UDP-N-acetyl-alpha-D-glucosamine contacts are provided by Gly139, Glu154, Asn169, and Asn227. A Mg(2+)-binding site is contributed by Asn227. Residues 230–250 (VALAKAEKVMRRRINHAHMVN) are linker. The N-acetyltransferase stretch occupies residues 251-459 (GVTLTNPAST…KKKPHHPNNK (209 aa)). UDP-N-acetyl-alpha-D-glucosamine-binding residues include Arg332 and Lys350. Catalysis depends on His362, which acts as the Proton acceptor. UDP-N-acetyl-alpha-D-glucosamine is bound by residues Tyr365 and Asn376. Residues Ala379, 385 to 386 (NY), Ser404, Ala422, and Arg439 contribute to the acetyl-CoA site.

The protein in the N-terminal section; belongs to the N-acetylglucosamine-1-phosphate uridyltransferase family. This sequence in the C-terminal section; belongs to the transferase hexapeptide repeat family. In terms of assembly, homotrimer. Requires Mg(2+) as cofactor.

The protein localises to the cytoplasm. The catalysed reaction is alpha-D-glucosamine 1-phosphate + acetyl-CoA = N-acetyl-alpha-D-glucosamine 1-phosphate + CoA + H(+). It catalyses the reaction N-acetyl-alpha-D-glucosamine 1-phosphate + UTP + H(+) = UDP-N-acetyl-alpha-D-glucosamine + diphosphate. Its pathway is nucleotide-sugar biosynthesis; UDP-N-acetyl-alpha-D-glucosamine biosynthesis; N-acetyl-alpha-D-glucosamine 1-phosphate from alpha-D-glucosamine 6-phosphate (route II): step 2/2. It participates in nucleotide-sugar biosynthesis; UDP-N-acetyl-alpha-D-glucosamine biosynthesis; UDP-N-acetyl-alpha-D-glucosamine from N-acetyl-alpha-D-glucosamine 1-phosphate: step 1/1. It functions in the pathway bacterial outer membrane biogenesis; LPS lipid A biosynthesis. Its function is as follows. Catalyzes the last two sequential reactions in the de novo biosynthetic pathway for UDP-N-acetylglucosamine (UDP-GlcNAc). The C-terminal domain catalyzes the transfer of acetyl group from acetyl coenzyme A to glucosamine-1-phosphate (GlcN-1-P) to produce N-acetylglucosamine-1-phosphate (GlcNAc-1-P), which is converted into UDP-GlcNAc by the transfer of uridine 5-monophosphate (from uridine 5-triphosphate), a reaction catalyzed by the N-terminal domain. The protein is Bifunctional protein GlmU of Streptococcus mutans serotype c (strain ATCC 700610 / UA159).